A 1091-amino-acid polypeptide reads, in one-letter code: LRR receptor-like serine/threonine-protein kinase RGI3 (1091 aa).

Positions 1 to 24 (MPPNIYRLSFFSSLLCFFFIPCFS) are cleaved as a signal peptide. Topologically, residues 25–703 (LDQQGQALLS…TTRNSSVVRL (679 aa)) are extracellular. The LRR 1 repeat unit spans residues 33 to 56 (LSWKSQLNISGDAFSSWHVADTSP). N-linked (GlcNAc...) asparagine glycosylation occurs at Asn-40. A disulfide bridge connects residues Cys-57 and Cys-64. LRR repeat units follow at residues 67 to 91 (RGEV…SLRS), 92 to 115 (LKSL…EIGD), 116 to 140 (FTEL…IFRL), 142 to 166 (KLKT…NLSG), 168 to 188 (VELM…IGEL), 190 to 213 (NLQV…IGNC), 214 to 237 (ENLV…IGNL), 239 to 261 (RVQT…IGYC), 262 to 285 (TELQ…IGGL), 287 to 309 (KLQS…LGNC), 311 to 332 (ELWL…SFGK), 333 to 357 (LENL…LTNC), 359 to 383 (KLTH…NLRS), 385 to 405 (TMFF…LSQC), 406 to 429 (RELQ…IFGL), 431 to 453 (NLTK…IGNC), 454 to 477 (TNLY…IGNL), 478 to 501 (KNLN…ISGC), 503 to 524 (SLEF…TTLP), 525 to 548 (KSLK…IGLL), 549 to 572 (TELT…ISTC), 574 to 596 (SLQL…LGQI), 598 to 620 (SLAI…RFSD), 621 to 644 (LKNL…LTDL), 645 to 668 (QNLV…PFFR), and 669 to 690 (RLPL…ISTR). Asn-104 carries N-linked (GlcNAc...) asparagine glycosylation. The N-linked (GlcNAc...) asparagine glycan is linked to Asn-163. Short sequence motifs (small peptide recognition) lie at residues 173 to 174 (FD), 195 to 198 (RAGG), 218 to 223 (MLGLAE), Tyr-246, and 268 to 270 (YLY). 2 short sequence motifs (small peptide recognition) span residues 316-319 (DFSE) and 338-340 (ELQ). Asn-356 carries an N-linked (GlcNAc...) asparagine glycan. 2 short sequence motifs (small peptide recognition) span residues 386–390 (MFFAW) and 412–415 (DLSY). The N-linked (GlcNAc...) asparagine glycan is linked to Asn-431. The Small peptide recognition motif lies at 434 to 438 (KLLLL). A glycan (N-linked (GlcNAc...) asparagine) is linked at Asn-452. Positions 458-460 (RLR) match the Small peptide recognition motif. Residue Asn-604 is glycosylated (N-linked (GlcNAc...) asparagine). N-linked (GlcNAc...) asparagine glycosylation is present at Asn-651. Asn-697 carries N-linked (GlcNAc...) asparagine glycosylation. The helical transmembrane segment at 704–724 (TILILVVVTAVLVLMAVYTLV) threads the bilayer. At 725 to 1091 (RARAAGKQLL…CSFAFSDDSV (367 aa)) the chain is on the cytoplasmic side. A Protein kinase domain is found at 760–1046 (LTSANVIGTG…MLTEIRHIDV (287 aa)). Residues 766–774 (IGTGSSGVV) and Lys-788 each bind ATP. A phosphotyrosine mark is found at Tyr-831 and Tyr-870. Residue Asp-883 is the Proton acceptor of the active site. Residue Tyr-933 is modified to Phosphotyrosine.

It belongs to the protein kinase superfamily. Ser/Thr protein kinase family. As to quaternary structure, binds to RGF peptides such as RGF1, GLV5/CLEL1/RGF2, GLV7/CLEL3/RGF3, GLV3/RGF4, GLV10/CLEL7/RGF5 and RGF10/CLELN; these interactions trigger the formation of heterodimers with SERK1, SERK2 or BAK1/SERK3 via LRR regions. In terms of processing, phosphorylated and ubiquitinated upon interaction with RGF1, thus leading to activation a subsequent degradation. Post-translationally, autophosphorylated. Expressed in roots.

The protein localises to the cell membrane. It carries out the reaction L-seryl-[protein] + ATP = O-phospho-L-seryl-[protein] + ADP + H(+). The enzyme catalyses L-threonyl-[protein] + ATP = O-phospho-L-threonyl-[protein] + ADP + H(+). Functionally, together with RGI1, RGI2, RGI4 and RGI5, acts as a receptor of RGF peptides (e.g. RGF1, GLV5/CLEL1/RGF2, GLV7/CLEL3/RGF3, GLV3/RGF4, GLV10/CLEL7/RGF5 and RGF10/CLELN), peptide hormones which maintain the postembryonic root stem cell niche by regulating the expression levels and patterns of the transcription factor PLETHORA (PLT, e.g. PLT1 and PLT2). Links RGF peptides signal with their downstream components. The chain is LRR receptor-like serine/threonine-protein kinase RGI3 from Arabidopsis thaliana (Mouse-ear cress).